The following is a 475-amino-acid chain: B-type cell cycle switch protein ccs52A (475 aa).

The disordered stretch occupies residues 1–29; it reads MDGTGNRNPPPTSTVGDNSPPPEPSPESL. The short motif at 7-28 is the PEST motif element; the sequence is RNPPPTSTVGDNSPPPEPSPES. A phosphoserine mark is found at Ser-43 and Ser-45. Residues 51–57 carry the C-box motif; sequence DRFIPSR. The CSM motif motif lies at 80–91; it reads AYTTLLRTALFG. A Phosphothreonine modification is found at Thr-99. A phosphoserine mark is found at Ser-144 and Ser-155. WD repeat units follow at residues 166 to 203, 207 to 246, 249 to 289, 290 to 329, 332 to 374, 376 to 417, and 420 to 459; these read QDDF…VTKL, GVDD…KIRS, GHRL…SKLS, GHKS…PVLK, EHTA…HLSC, DTGS…KLAT, and GHTY…KSQN. Ser-454 carries the phosphoserine modification.

The protein belongs to the WD repeat CDC20/Fizzy family. In terms of tissue distribution, mostly expressed in nodules, and, to a lower extent, in root tips, stems, hypocotyls, leaves, flower buds and flowers.

It is found in the nucleus. The protein operates within protein modification; protein ubiquitination. Component of the anaphase promoting complex/cyclosome (APC/C), a cell cycle-regulated E3 ubiquitin-protein ligase complex that controls progression through mitosis and the G1 phase of the cell cycle. Required to switch form cell proliferation to cell differentiation, endoreduplication and ploidy-dependent cell enlargement, including during nodulation, before nodule differentiation. Involved in root-knot nematode Meloidogyne incognita giant cells formation. This Medicago truncatula (Barrel medic) protein is B-type cell cycle switch protein ccs52A.